The sequence spans 184 residues: Elongation factor P (184 aa).

The protein belongs to the elongation factor P family.

The protein resides in the cytoplasm. It functions in the pathway protein biosynthesis; polypeptide chain elongation. Functionally, involved in peptide bond synthesis. Stimulates efficient translation and peptide-bond synthesis on native or reconstituted 70S ribosomes in vitro. Probably functions indirectly by altering the affinity of the ribosome for aminoacyl-tRNA, thus increasing their reactivity as acceptors for peptidyl transferase. In Thermus thermophilus (strain ATCC BAA-163 / DSM 7039 / HB27), this protein is Elongation factor P.